The sequence spans 78 residues: U7-lycotoxin-Ls1a (78 aa).

Positions 1–22 are cleaved as a signal peptide; sequence MKLIIFTGLALLLIVSLIDVEA. Residues 23–26 constitute a propeptide that is removed on maturation; that stretch reads QNEG.

It belongs to the neurotoxin 19 (CSTX) family. 07 (U7-Lctx) subfamily. In terms of processing, contains 4 disulfide bonds. As to expression, expressed by the venom gland.

The protein resides in the secreted. The protein is U7-lycotoxin-Ls1a of Lycosa singoriensis (Wolf spider).